The chain runs to 218 residues: MGETDNAPRGPPSFLPHKMNLLLRGLLLFLIGVFLALVLNLLQVQRNVTLFPPDVLSSLFSSAWWVPLCCGTAAAAIGLLYPCIDRHLGEPHKFKREWSSVMRCVAVFVGINHASAKVDFANNTQLSLTLAALSIGLWWTFDRSRSGLGLGIGISFFATVVSQLLVYNGVYEYTAPDFLYVRSWLPCIFFAGGITMGNIGRQLEMYERLALVEKSHRD.

The Cytoplasmic portion of the chain corresponds to 1–21 (MGETDNAPRGPPSFLPHKMNL). The helical transmembrane segment at 22 to 44 (LLRGLLLFLIGVFLALVLNLLQV) threads the bilayer. At 45–63 (QRNVTLFPPDVLSSLFSSA) the chain is on the lumenal side. The helical transmembrane segment at 64–81 (WWVPLCCGTAAAAIGLLY) threads the bilayer. The Cytoplasmic segment spans residues 82 to 96 (PCIDRHLGEPHKFKR). Residues 97–119 (EWSSVMRCVAVFVGINHASAKVD) traverse the membrane as a helical segment. Topologically, residues 120–122 (FAN) are lumenal. The chain crosses the membrane as a helical span at residues 123–141 (NTQLSLTLAALSIGLWWTF). At 142–146 (DRSRS) the chain is on the cytoplasmic side. A helical membrane pass occupies residues 147–168 (GLGLGIGISFFATVVSQLLVYN). At 169–182 (GVYEYTAPDFLYVR) the chain is on the lumenal side. The helical transmembrane segment at 183–200 (SWLPCIFFAGGITMGNIG) threads the bilayer. The Cytoplasmic portion of the chain corresponds to 201–218 (RQLEMYERLALVEKSHRD). The KxHxx signature appears at 212-218 (VEKSHRD).

Belongs to the INSIG family. As to quaternary structure, interacts with scap; interaction is direct and only takes place in the presence of sterols; it prevents interaction between scap and the coat protein complex II (COPII). Associates with the SCAP-SREBP complex; association is mediated via its interaction with scap and only takes place in the presence of sterols.

Its subcellular location is the endoplasmic reticulum membrane. Oxysterol-binding protein that mediates feedback control of cholesterol synthesis by controlling both endoplasmic reticulum to Golgi transport of scap and degradation of hmgcr. Acts as a negative regulator of cholesterol biosynthesis by mediating the retention of the SCAP-SREBP complex in the endoplasmic reticulum, thereby blocking the processing of sterol regulatory element-binding proteins (SREBPs). Binds oxysterol, including 22-hydroxycholesterol, 24-hydroxycholesterol, 25-hydroxycholesterol and 27-hydroxycholesterol, regulating interaction with scap and retention of the SCAP-SREBP complex in the endoplasmic reticulum. In presence of oxysterol, interacts with scap, retaining the SCAP-SREBP complex in the endoplasmic reticulum, thereby preventing scap from escorting SREBPs to the Golgi. Sterol deprivation reduce oxysterol-binding, disrupting the interaction between insig2 and scap, thereby promoting Golgi transport of the SCAP-SREBP complex, followed by processing and nuclear translocation of SREBPs. Also regulates cholesterol synthesis by regulating degradation of hmgcr. The chain is Insulin-induced gene 2 protein from Xenopus tropicalis (Western clawed frog).